The sequence spans 243 residues: LexA repressor 2 (243 aa).

A DNA-binding region (H-T-H motif) is located at residues 48–68; that stretch reads IREIGDAVGLTSTSSVAHQLR. Residues Ser167 and Lys204 each act as for autocatalytic cleavage activity in the active site.

It belongs to the peptidase S24 family. Homodimer.

The catalysed reaction is Hydrolysis of Ala-|-Gly bond in repressor LexA.. In terms of biological role, represses a number of genes involved in the response to DNA damage (SOS response), including recA and lexA. In the presence of single-stranded DNA, RecA interacts with LexA causing an autocatalytic cleavage which disrupts the DNA-binding part of LexA, leading to derepression of the SOS regulon and eventually DNA repair. The sequence is that of LexA repressor 2 from Nocardia farcinica (strain IFM 10152).